We begin with the raw amino-acid sequence, 112 residues long: uncharacterized protein (112 aa).

2 helical membrane passes run 55 to 75 and 91 to 111; these read LLEINLLVAATVIHLIAPTLF and LIMLGLRIAVLLAKQLLLLLL.

The protein localises to the membrane. This is an uncharacterized protein from Saccharomyces cerevisiae (strain ATCC 204508 / S288c) (Baker's yeast).